We begin with the raw amino-acid sequence, 479 residues long: Ammonium transporter Rh type C (479 aa).

At methionine 1 to tryptophan 9 the chain is on the cytoplasmic side. The chain crosses the membrane as a helical span at residues arginine 10–valine 30. The Extracellular segment spans residues arginine 31–tyrosine 60. N-linked (GlcNAc...) asparagine glycosylation is present at asparagine 48. A helical membrane pass occupies residues proline 61–leucine 81. Over glutamine 82 to glycine 85 the chain is Cytoplasmic. The helical transmembrane segment at phenylalanine 86–methionine 106 threads the bilayer. Topologically, residues glutamine 107 to glutamate 123 are extracellular. The chain crosses the membrane as a helical span at residues asparagine 124–glycine 144. The Cytoplasmic segment spans residues lysine 145–proline 148. Residues isoleucine 149–leucine 169 form a helical membrane-spanning segment. At leucine 170 to aspartate 177 the chain is on the extracellular side. A helical transmembrane segment spans residues alanine 178–tyrosine 200. At arginine 201 to aspartate 218 the chain is on the cytoplasmic side. Residues leucine 219 to isoleucine 239 traverse the membrane as a helical segment. Residues serine 240–alanine 250 are Extracellular-facing. Residues isoleucine 251–leucine 271 traverse the membrane as a helical segment. At histidine 272–histidine 281 the chain is on the cytoplasmic side. Residues isoleucine 282–methionine 302 form a helical membrane-spanning segment. Residue proline 303 is a topological domain, extracellular. Residues tyrosine 304–leucine 324 traverse the membrane as a helical segment. Topologically, residues threonine 325 to glycine 345 are cytoplasmic. The chain crosses the membrane as a helical span at residues isoleucine 346–valine 366. The Extracellular segment spans residues tyrosine 367 to glutamine 394. The chain crosses the membrane as a helical span at residues isoleucine 395 to isoleucine 415. Residues leucine 416–proline 479 lie on the Cytoplasmic side of the membrane.

This sequence belongs to the ammonium transporter (TC 2.A.49) family. Rh subfamily. Homotrimer. In terms of processing, N-glycosylated. Expressed in brain, testis, placenta, pancreas, esophagus and prostate. Expressed in squamous epithelial tissues (at protein level). Expressed in kidney.

The protein localises to the cell membrane. Its subcellular location is the apical cell membrane. It carries out the reaction NH4(+)(in) = NH4(+)(out). The catalysed reaction is methylamine(out) = methylamine(in). It catalyses the reaction CO2(out) = CO2(in). Its function is as follows. Ammonium transporter involved in the maintenance of acid-base homeostasis. Transports ammonium and its related derivative methylammonium across the plasma membrane of epithelial cells likely contributing to renal transepithelial ammonia transport and ammonia metabolism. Postulated to primarily mediate an electroneutral bidirectional transport of NH3 ammonia species according to a mechanism that implies interaction of an NH4(+) ion with acidic residues of the pore entry followed by dissociation of NH4(+) into NH3 and H(+). As a result NH3 transits through the central pore and is protonated on the extracellular side reforming NH4(+). May act as a CO2 channel providing for renal acid secretion. This Homo sapiens (Human) protein is Ammonium transporter Rh type C (RHCG).